A 1092-amino-acid chain; its full sequence is DNA polymerase delta catalytic subunit (1092 aa).

The tract at residues 1–71 (MDGKRKFNGT…SRPPPPELDP (71 aa)) is disordered. The short motif at 4–19 (KRKFNGTSNGHAKKPR) is the Nuclear localization signal element. Zn(2+) contacts are provided by Cys997, Cys1000, Cys1014, and Cys1017. The CysA-type zinc-finger motif lies at 997-1017 (CLGCKSLMPKGYEQACLCPHC). [4Fe-4S] cluster is bound by residues Cys1046, Cys1049, Cys1059, and Cys1064. The short motif at 1046 to 1064 (CQRCQESLHEEVICSNRDC) is the CysB motif element.

Belongs to the DNA polymerase type-B family. Catalytic component of the DNA polymerase delta complex consisting of three subunits: the catalytic subunit PolD1 and two accessory subunits PolD2/Pol31 and PolD3/Pol32. Within the delta complex, interacts with both PolD2 and PolD3, and is able to interact with PolD2 in the absence of PolD3. Interacts with PCNA and PCNA2. [4Fe-4S] cluster serves as cofactor. Mg(2+) is required as a cofactor. As to expression, expressed in ovaries (at the protein level). Expressed in embryos (at the protein level).

It is found in the nucleus. It localises to the nucleoplasm. It carries out the reaction DNA(n) + a 2'-deoxyribonucleoside 5'-triphosphate = DNA(n+1) + diphosphate. Its activity is regulated as follows. Inhibited by KCL. Also inhibited by carbonyldiphosphonate, aphidicolin and N-ethylmaleimide (NEM). As the catalytic component of the DNA polymerase delta complex, plays a crucial role in high fidelity genome replication, including lagging strand synthesis, DNA recombination and repair. Exhibits both DNA polymerase and 3'- to 5'-exonuclease activities. Required at the nucleus of rapidly dividing embryonic cells to activate genome replication during the earliest cell cycles. Likely to require the presence of accessory proteins PolD2 and PolD3 for full activity. The sequence is that of DNA polymerase delta catalytic subunit from Drosophila melanogaster (Fruit fly).